Here is a 357-residue protein sequence, read N- to C-terminus: MSILEIDGSIGEGGGQILRYALALSALTLKPIRVYNIRAKRDNPGLRPQHLTAVEVLKEVTGAEVENAKVGSMEILFKPTSRRSGEMEIDIGTAGSISLVLQAMLPVLLFAEGDSRARLKGGTNVPWSPPIDYIKHVFLYNISHMGVRANIEVVRRGHYPRGGGLVNVEVKRVEEALKPLMIVRRGRIRGFRIHSHCVKLPAHVAVRQCESARRILSGIFKEKITEEIETYPPDKDPHLGPGSGILIYVEAEPGIRLGSDSLGEKGKPAERVGEEAALILIEELETGMAFDRHMGDMLIPYLFLAKGTSRIGVSMITLHLLTAIEVGKLFFPEAKVEVDGELGKPGIITIQGVGYKP.

ATP is bound by residues Gln102 and 293-296 (HMGD). His319 serves as the catalytic Tele-AMP-histidine intermediate.

This sequence belongs to the RNA 3'-terminal cyclase family. Type 1 subfamily.

It localises to the cytoplasm. The enzyme catalyses a 3'-end 3'-phospho-ribonucleotide-RNA + ATP = a 3'-end 2',3'-cyclophospho-ribonucleotide-RNA + AMP + diphosphate. Its function is as follows. Catalyzes the conversion of 3'-phosphate to a 2',3'-cyclic phosphodiester at the end of RNA. The mechanism of action of the enzyme occurs in 3 steps: (A) adenylation of the enzyme by ATP; (B) transfer of adenylate to an RNA-N3'P to produce RNA-N3'PP5'A; (C) and attack of the adjacent 2'-hydroxyl on the 3'-phosphorus in the diester linkage to produce the cyclic end product. The biological role of this enzyme is unknown but it is likely to function in some aspects of cellular RNA processing. This chain is RNA 3'-terminal phosphate cyclase, found in Desulfurococcus amylolyticus (strain DSM 18924 / JCM 16383 / VKM B-2413 / 1221n) (Desulfurococcus kamchatkensis).